The chain runs to 412 residues: Lysosomal phospholipase A and acyltransferase (412 aa).

The first 33 residues, 1–33 (MGLHLRPYRVGLLPDGLLFLLLLLMLLADPALP), serve as a signal peptide directing secretion. Asp46 lines the substrate pocket. Residues Cys65 and Cys89 are joined by a disulfide bond. The N-linked (GlcNAc...) asparagine glycan is linked to Asn99. Ser198 serves as the catalytic Acyl-ester intermediate. Ser198 is a Zn(2+) binding site. Met199 serves as a coordination point for substrate. Asn273 and Asn289 each carry an N-linked (GlcNAc...) asparagine glycan. The Zn(2+) site is built by Asp340 and Cys355. Active-site charge relay system residues include Asp360 and His392. Zn(2+) is bound at residue His392. Asn398 is a glycosylation site (N-linked (GlcNAc...) asparagine).

This sequence belongs to the AB hydrolase superfamily. Lipase family. Post-translationally, N-glycosylated. N-glycosylation is important for maturation of the enzyme and normal subcellular location. Detected in blood plasma (at protein level). Ubiquitous. Highly expressed in heart, placenta, skeletal muscle, kidney and pancreas. Detected at lower levels in spleen, thymus, prostate, testis, ovary, small intestine, colon and peripheral blood leukocytes.

It is found in the lysosome. The protein localises to the secreted. The protein resides in the membrane. It carries out the reaction a 1,2-diacyl-sn-glycero-3-phosphocholine + H2O = a 2-acyl-sn-glycero-3-phosphocholine + a fatty acid + H(+). It catalyses the reaction 1-hexadecanoyl-2-(9Z-octadecenoyl)-sn-glycero-3-phosphocholine + H2O = 2-(9Z-octadecenoyl)-sn-glycero-3-phosphocholine + hexadecanoate + H(+). The enzyme catalyses 1-hexadecanoyl-2-glutaroyl-sn-glycero-3-phosphocholine + H2O = 2-glutaroyl-sn-glycero-3-phosphocholine + hexadecanoate + H(+). The catalysed reaction is 1-hexadecanoyl-2-nonadioyl-sn-glycero-3-phosphocholine + H2O = 2-nonadioyl-sn-glycero-3-phosphocholine + hexadecanoate + H(+). It carries out the reaction 1-hexadecanoyl-2-(5-oxopentanoyl)-sn-glycero-3-phosphocholine + H2O = 2-(5-oxopentanoyl)-sn-glycero-3-phosphocholine + hexadecanoate + H(+). It catalyses the reaction 1-hexadecanoyl-2-(9-oxononanoyl)-sn-glycero-3-phosphocholine + H2O = 2-(9-oxononanoyl)-sn-glycero-3-phosphocholine + hexadecanoate + H(+). The enzyme catalyses 1,2-dihexadecanoyl-sn-glycero-3-phosphocholine + H2O = 2-hexadecanoyl-sn-glycero-3-phosphocholine + hexadecanoate + H(+). The catalysed reaction is a 1,2-diacyl-sn-glycero-3-phosphocholine + H2O = a 1-acyl-sn-glycero-3-phosphocholine + a fatty acid + H(+). It carries out the reaction 1,2-di-(9Z-octadecenoyl)-sn-glycero-3-phosphocholine + H2O = 1-(9Z-octadecenoyl)-sn-glycero-3-phosphocholine + (9Z)-octadecenoate + H(+). It catalyses the reaction 1-hexadecanoyl-2-(9Z-octadecenoyl)-sn-glycero-3-phosphocholine + H2O = 1-hexadecanoyl-sn-glycero-3-phosphocholine + (9Z)-octadecenoate + H(+). The enzyme catalyses 1,2-dihexadecanoyl-sn-glycero-3-phosphocholine + H2O = 1-hexadecanoyl-sn-glycero-3-phosphocholine + hexadecanoate + H(+). The catalysed reaction is a 1-acyl-sn-glycero-3-phosphocholine + H2O = sn-glycerol 3-phosphocholine + a fatty acid + H(+). It carries out the reaction 1-hexadecanoyl-sn-glycero-3-phosphocholine + H2O = sn-glycerol 3-phosphocholine + hexadecanoate + H(+). It catalyses the reaction N-(acetyl)-sphing-4-enine + a 1,2-diacyl-sn-glycero-3-phosphoethanolamine = 1-O-acyl-N-(acetyl)-sphing-4-enine + a 2-acyl-sn-glycero-3-phosphoethanolamine. The enzyme catalyses 1-hexadecanoyl-2-(9Z-octadecenoyl)-sn-glycero-3-phosphoethanolamine + N-(acetyl)-sphing-4-enine = 2-(9Z-octadecenoyl)-sn-glycero-3-phosphoethanolamine + 1-hexadecanoyl-N-(acetyl)-sphing-4-enine. The catalysed reaction is 1-hexadecanoyl-2-(9Z,12Z-octadecadienoyl)-sn-glycero-3-phosphoethanolamine + N-(acetyl)-sphing-4-enine = 2-(9Z,12Z)-octadecadienoyl-sn-glycero-3-phosphoethanolamine + 1-hexadecanoyl-N-(acetyl)-sphing-4-enine. It carries out the reaction 1-hexadecanoyl-2-(5Z,8Z,11Z,14Z-eicosatetraenoyl)-sn-glycero-3-phosphoethanolamine + N-(acetyl)-sphing-4-enine = 2-(5Z,8Z,11Z,14Z)-eicosatetraenoyl-sn-glycero-3-phosphoethanolamine + 1-hexadecanoyl-N-(acetyl)-sphing-4-enine. It catalyses the reaction N-(acetyl)-sphing-4-enine + a 1,2-diacyl-sn-glycero-3-phosphoethanolamine = 1-O-acyl-N-(acetyl)-sphing-4-enine + a 1-acyl-sn-glycero-3-phosphoethanolamine. The enzyme catalyses 1-hexadecanoyl-2-(9Z-octadecenoyl)-sn-glycero-3-phosphoethanolamine + N-(acetyl)-sphing-4-enine = 1-(9Z-octadecenoyl)-N-(acetyl)-sphing-4-enine + 1-hexadecanoyl-sn-glycero-3-phosphoethanolamine. The catalysed reaction is 1-hexadecanoyl-2-(9Z,12Z-octadecadienoyl)-sn-glycero-3-phosphoethanolamine + N-(acetyl)-sphing-4-enine = 1-(9Z,12Z-octadecadienoyl)-N-acetylsphing-4-enine + 1-hexadecanoyl-sn-glycero-3-phosphoethanolamine. It carries out the reaction 1-hexadecanoyl-2-(5Z,8Z,11Z,14Z-eicosatetraenoyl)-sn-glycero-3-phosphoethanolamine + N-(acetyl)-sphing-4-enine = 1-(5Z,8Z,11Z,14Z)-eicosatetraenoyl-N-(acetyl)-sphing-4-enine + 1-hexadecanoyl-sn-glycero-3-phosphoethanolamine. It catalyses the reaction N-(acetyl)-sphing-4-enine + a 1,2-diacyl-sn-glycero-3-phosphocholine = 1-O-acyl-N-(acetyl)-sphing-4-enine + a 1-acyl-sn-glycero-3-phosphocholine. The enzyme catalyses 1-hexadecanoyl-2-(9Z-octadecenoyl)-sn-glycero-3-phosphocholine + N-(acetyl)-sphing-4-enine = 1-(9Z-octadecenoyl)-N-(acetyl)-sphing-4-enine + 1-hexadecanoyl-sn-glycero-3-phosphocholine. The catalysed reaction is 1-hexadecanoyl-2-(9Z,12Z-octadecadienoyl)-sn-glycero-3-phosphocholine + N-(acetyl)-sphing-4-enine = 1-(9Z,12Z-octadecadienoyl)-N-acetylsphing-4-enine + 1-hexadecanoyl-sn-glycero-3-phosphocholine. It carries out the reaction 1-hexadecanoyl-2-(5Z,8Z,11Z,14Z-eicosatetraenoyl)-sn-glycero-3-phosphocholine + N-(acetyl)-sphing-4-enine = 1-(5Z,8Z,11Z,14Z)-eicosatetraenoyl-N-(acetyl)-sphing-4-enine + 1-hexadecanoyl-sn-glycero-3-phosphocholine. It catalyses the reaction 1-hexadecanoyl-2-(4Z,7Z,10Z,13Z,16Z,19Z-docosahexaenoyl)-sn-glycero-3-phosphocholine + N-(acetyl)-sphing-4-enine = 1-(4Z,7Z,10Z,13Z,16Z,19Z-docosahexaenoyl)-N-(acetyl)-sphing-4-enine + 1-hexadecanoyl-sn-glycero-3-phosphocholine. The enzyme catalyses 1-octadecanoyl-2-(9Z-octadecenoyl)-sn-glycero-3-phosphocholine + N-(acetyl)-sphing-4-enine = 1-(9Z-octadecenoyl)-N-(acetyl)-sphing-4-enine + 1-octadecanoyl-sn-glycero-3-phosphocholine. The catalysed reaction is 1-octadecanoyl-2-(9Z,12Z)-octadecadienoyl-sn-glycero-3-phosphocholine + N-(acetyl)-sphing-4-enine = 1-(9Z,12Z-octadecadienoyl)-N-acetylsphing-4-enine + 1-octadecanoyl-sn-glycero-3-phosphocholine. It carries out the reaction 1-octadecanoyl-2-(5Z,8Z,11Z,14Z-eicosatetraenoyl)-sn-glycero-3-phosphocholine + N-(acetyl)-sphing-4-enine = 1-(5Z,8Z,11Z,14Z)-eicosatetraenoyl-N-(acetyl)-sphing-4-enine + 1-octadecanoyl-sn-glycero-3-phosphocholine. It catalyses the reaction 1-(9Z-octadecenoyl)-2-hexadecanoyl-sn-glycero-3-phosphocholine + N-(acetyl)-sphing-4-enine = 1-hexadecanoyl-N-(acetyl)-sphing-4-enine + 1-(9Z-octadecenoyl)-sn-glycero-3-phosphocholine. The enzyme catalyses 1-(9Z)-octadecenoyl-2-octadecanoyl-sn-glycero-3-phosphocholine + N-(acetyl)-sphing-4-enine = 1-octadecanoyl-N-(acetyl)-sphing-4-enine + 1-(9Z-octadecenoyl)-sn-glycero-3-phosphocholine. The catalysed reaction is 1,2-di-(9Z-octadecenoyl)-sn-glycero-3-phosphocholine + N-(acetyl)-sphing-4-enine = 1-(9Z-octadecenoyl)-N-(acetyl)-sphing-4-enine + 1-(9Z-octadecenoyl)-sn-glycero-3-phosphocholine. It carries out the reaction N-(acetyl)-sphing-4-enine + a 1,2-diacyl-sn-glycero-3-phosphocholine = 1-O-acyl-N-(acetyl)-sphing-4-enine + a 2-acyl-sn-glycero-3-phosphocholine. It catalyses the reaction 1-hexadecanoyl-2-(9Z-octadecenoyl)-sn-glycero-3-phosphocholine + N-(acetyl)-sphing-4-enine = 1-hexadecanoyl-N-(acetyl)-sphing-4-enine + 2-(9Z-octadecenoyl)-sn-glycero-3-phosphocholine. The enzyme catalyses 1-hexadecanoyl-2-(9Z,12Z-octadecadienoyl)-sn-glycero-3-phosphocholine + N-(acetyl)-sphing-4-enine = 2-(9Z,12Z-octadecadienoyl)-sn-glycero-3-phosphocholine + 1-hexadecanoyl-N-(acetyl)-sphing-4-enine. The catalysed reaction is 1-hexadecanoyl-2-(5Z,8Z,11Z,14Z-eicosatetraenoyl)-sn-glycero-3-phosphocholine + N-(acetyl)-sphing-4-enine = 1-hexadecanoyl-N-(acetyl)-sphing-4-enine + 2-(5Z,8Z,11Z,14Z)-eicosatetraenoyl-sn-glycero-3-phosphocholine. It carries out the reaction 1-hexadecanoyl-2-(4Z,7Z,10Z,13Z,16Z,19Z-docosahexaenoyl)-sn-glycero-3-phosphocholine + N-(acetyl)-sphing-4-enine = 2-(4Z,7Z,10Z,13Z,16Z,19Z-docosahexaenoyl)-sn-glycero-3-phosphocholine + 1-hexadecanoyl-N-(acetyl)-sphing-4-enine. It catalyses the reaction 1-hexadecanoyl-2-nonadioyl-sn-glycero-3-phosphocholine + N-(acetyl)-sphing-4-enine = 2-nonadioyl-sn-glycero-3-phosphocholine + 1-hexadecanoyl-N-(acetyl)-sphing-4-enine. The enzyme catalyses 1-octadecanoyl-2-(9Z-octadecenoyl)-sn-glycero-3-phosphocholine + N-(acetyl)-sphing-4-enine = 1-octadecanoyl-N-(acetyl)-sphing-4-enine + 2-(9Z-octadecenoyl)-sn-glycero-3-phosphocholine. The catalysed reaction is 1-octadecanoyl-2-(5Z,8Z,11Z,14Z-eicosatetraenoyl)-sn-glycero-3-phosphocholine + N-(acetyl)-sphing-4-enine = 1-octadecanoyl-N-(acetyl)-sphing-4-enine + 2-(5Z,8Z,11Z,14Z)-eicosatetraenoyl-sn-glycero-3-phosphocholine. It carries out the reaction 1-(9Z-octadecenoyl)-2-hexadecanoyl-sn-glycero-3-phosphocholine + N-(acetyl)-sphing-4-enine = 1-(9Z-octadecenoyl)-N-(acetyl)-sphing-4-enine + 2-hexadecanoyl-sn-glycero-3-phosphocholine. It catalyses the reaction 1-(9Z)-octadecenoyl-2-octadecanoyl-sn-glycero-3-phosphocholine + N-(acetyl)-sphing-4-enine = 2-octadecanoyl-sn-glycero-3-phosphocholine + 1-(9Z-octadecenoyl)-N-(acetyl)-sphing-4-enine. The enzyme catalyses a 1,2-diacyl-sn-glycero-3-phospho-L-serine + N-(acetyl)-sphing-4-enine = a 2-acyl-sn-glycero-3-phospho-L-serine + 1-O-acyl-N-(acetyl)-sphing-4-enine. The catalysed reaction is 1-octadecanoyl-2-(9Z-octadecenoyl)-sn-glycero-3-phospho-L-serine + N-(acetyl)-sphing-4-enine = 2-(9Z-octadecenoyl)-sn-glycero-3-phospho-L-serine + 1-octadecanoyl-N-(acetyl)-sphing-4-enine. It carries out the reaction a 1,2-diacyl-sn-glycero-3-phospho-L-serine + N-(acetyl)-sphing-4-enine = 1-O-acyl-N-(acetyl)-sphing-4-enine + a 1-acyl-sn-glycero-3-phospho-L-serine. It catalyses the reaction 1-octadecanoyl-2-(9Z-octadecenoyl)-sn-glycero-3-phospho-L-serine + N-(acetyl)-sphing-4-enine = 1-octadecanoyl-sn-glycero-3-phosphoserine + 1-(9Z-octadecenoyl)-N-(acetyl)-sphing-4-enine. The enzyme catalyses a 1,2-diacyl-sn-glycero-3-phospho-(1'-sn-glycerol) + N-(acetyl)-sphing-4-enine = 2-acyl-sn-glycero-3-phospho-(1'-sn-glycerol) + 1-O-acyl-N-(acetyl)-sphing-4-enine. The catalysed reaction is 1-octadecanoyl-2-(9Z-octadecenoyl)-sn-glycero-3-phospho-(1'-sn-glycerol) + N-(acetyl)-sphing-4-enine = 2-(9Z-octadecenoyl)-sn-glycero-3-phospho-(1'-sn-glycerol) + 1-octadecanoyl-N-(acetyl)-sphing-4-enine. It carries out the reaction a 1,2-diacyl-sn-glycero-3-phospho-(1'-sn-glycerol) + N-(acetyl)-sphing-4-enine = 1-O-acyl-N-(acetyl)-sphing-4-enine + 1-acyl-sn-glycero-3-phospho-(1'-sn-glycerol). It catalyses the reaction 1-octadecanoyl-2-(9Z-octadecenoyl)-sn-glycero-3-phospho-(1'-sn-glycerol) + N-(acetyl)-sphing-4-enine = 1-octadecanoyl-sn-glycero-3-phospho-(1'-sn-glycerol) + 1-(9Z-octadecenoyl)-N-(acetyl)-sphing-4-enine. The enzyme catalyses an N-acylethanolamine + a 1,2-diacyl-sn-glycero-3-phosphocholine = 2-(acylamino)ethyl fatty acid + a 2-acyl-sn-glycero-3-phosphocholine. The catalysed reaction is an N-acylethanolamine + a 1,2-diacyl-sn-glycero-3-phosphocholine = 2-(acylamino)ethyl fatty acid + a 1-acyl-sn-glycero-3-phosphocholine. It carries out the reaction N-(5Z,8Z,11Z,14Z-eicosatetraenoyl)-ethanolamine + 1,2-di-(9Z-octadecenoyl)-sn-glycero-3-phosphocholine = 2-[(5Z,8Z,11Z,14Z)-eicosatetraenoylamino]ethyl (9Z)-octadecenoate + (9Z-octadecenoyl)-sn-glycero-3-phosphocholine. It catalyses the reaction N-(9Z-octadecenoyl) ethanolamine + 1,2-di-(9Z-octadecenoyl)-sn-glycero-3-phosphocholine = 2-[(9Z)-octadecenoylamino]ethyl (9Z)-octadecenoate + (9Z-octadecenoyl)-sn-glycero-3-phosphocholine. The enzyme catalyses a 3-acyl-sn-glycerol + a 1,2-diacyl-sn-glycero-3-phosphocholine = a 1,3-diacylglycerol + a 1-acyl-sn-glycero-3-phosphocholine. The catalysed reaction is a 3-acyl-sn-glycerol + a 1,2-diacyl-sn-glycero-3-phosphocholine = a 1,3-diacylglycerol + a 2-acyl-sn-glycero-3-phosphocholine. It carries out the reaction 3-(9Z-octadecenoyl)-sn-glycerol + 1,2-di-(9Z-octadecenoyl)-sn-glycero-3-phosphocholine = 1,3-di-(9Z-octadecenoyl)-glycerol + (9Z-octadecenoyl)-sn-glycero-3-phosphocholine. It catalyses the reaction 3-hexadecanoyl-sn-glycerol + 1,2-di-(9Z-octadecenoyl)-sn-glycero-3-phosphocholine = 1-(9Z)-octadecenoyl-3-hexadecanoyl-sn-glycerol + (9Z-octadecenoyl)-sn-glycero-3-phosphocholine. The enzyme catalyses a 1-acyl-sn-glycerol + a 1,2-diacyl-sn-glycero-3-phosphocholine = a 1,3-diacylglycerol + a 2-acyl-sn-glycero-3-phosphocholine. The catalysed reaction is a 1-acyl-sn-glycerol + a 1,2-diacyl-sn-glycero-3-phosphocholine = a 1,3-diacylglycerol + a 1-acyl-sn-glycero-3-phosphocholine. It carries out the reaction 1-(9Z-octadecenoyl)-sn-glycerol + 1,2-di-(9Z-octadecenoyl)-sn-glycero-3-phosphocholine = 1,3-di-(9Z-octadecenoyl)-glycerol + (9Z-octadecenoyl)-sn-glycero-3-phosphocholine. It catalyses the reaction 1-hexadecanoyl-sn-glycerol + 1,2-di-(9Z-octadecenoyl)-sn-glycero-3-phosphocholine = 1-hexadecanoyl-3-(9Z)-octadecenoyl-sn-glycerol + (9Z-octadecenoyl)-sn-glycero-3-phosphocholine. The enzyme catalyses a 2-acylglycerol + a 1,2-diacyl-sn-glycero-3-phosphocholine = a 1,2-diacylglycerol + a 2-acyl-sn-glycero-3-phosphocholine. The catalysed reaction is a 2-acylglycerol + a 1,2-diacyl-sn-glycero-3-phosphocholine = a 1,2-diacylglycerol + a 1-acyl-sn-glycero-3-phosphocholine. It carries out the reaction 2-hexadecanoylglycerol + 1,2-di-(9Z-octadecenoyl)-sn-glycero-3-phosphocholine = 1-(9Z)-octadecenoyl-2-hexadecanoylglycerol + (9Z-octadecenoyl)-sn-glycero-3-phosphocholine. It catalyses the reaction 1-O-alkylglycerol + a 1,2-diacyl-sn-glycero-3-phosphocholine = 1-O-alkyl-3-acylglycerol + a 1-acyl-sn-glycero-3-phosphocholine. The enzyme catalyses 1-O-alkylglycerol + a 1,2-diacyl-sn-glycero-3-phosphocholine = 1-O-alkyl-3-acylglycerol + a 2-acyl-sn-glycero-3-phosphocholine. The catalysed reaction is 1-O-hexadecylglycerol + 1,2-di-(9Z-octadecenoyl)-sn-glycero-3-phosphocholine = 1-O-hexadecyl-3-(9Z)-octadecenoylglycerol + (9Z-octadecenoyl)-sn-glycero-3-phosphocholine. It carries out the reaction 1-O-alkyl-2-acyl-sn-glycerol + a 1,2-diacyl-sn-glycero-3-phosphocholine = 1-O-alkyl-2,3-diacyl-sn-glycerol + a 2-acyl-sn-glycero-3-phosphocholine. It catalyses the reaction 1-O-alkyl-2-acyl-sn-glycerol + a 1,2-diacyl-sn-glycero-3-phosphocholine = 1-O-alkyl-2,3-diacyl-sn-glycerol + a 1-acyl-sn-glycero-3-phosphocholine. The enzyme catalyses 1-O-hexadecyl-2-acetyl-sn-glycerol + 1,2-di-(9Z-octadecenoyl)-sn-glycero-3-phosphocholine = 1-O-hexadecyl-2-acetyl-3-(9Z)-octadecenoyl-sn-glycerol + (9Z-octadecenoyl)-sn-glycero-3-phosphocholine. The catalysed reaction is 1-O-hexadecyl-2-O-methyl-sn-glycerol + 1,2-di-(9Z-octadecenoyl)-sn-glycero-3-phosphocholine = 1-O-hexadecyl-2-O-methyl-3-(9Z)-octadecenoyl-sn-glycerol + (9Z-octadecenoyl)-sn-glycero-3-phosphocholine. It carries out the reaction a 1,2-diacyl-sn-glycero-3-phosphoethanolamine + H2O = a 1-acyl-sn-glycero-3-phosphoethanolamine + a fatty acid + H(+). It catalyses the reaction 1-acyl-2-(5Z,8Z,11Z,14Z)-eicosatetraenoyl-sn-glycero-3-phosphoethanolamine + H2O = a 1-acyl-sn-glycero-3-phosphoethanolamine + (5Z,8Z,11Z,14Z)-eicosatetraenoate + H(+). The enzyme catalyses a 1,2-diacyl-sn-glycero-3-phospho-(1'-sn-glycerol) + H2O = 1-acyl-sn-glycero-3-phospho-(1'-sn-glycerol) + a fatty acid + H(+). The catalysed reaction is 1-hexadecanoyl-2-(9Z-octadecenoyl)-sn-glycero-3-phospho-(1'-sn-glycerol) + H2O = 1-hexadecanoyl-sn-glycero-3-phospho-(1'-sn-glycerol) + (9Z)-octadecenoate + H(+). It carries out the reaction a 1,2-diacyl-sn-glycero-3-phospho-(1'-sn-glycerol) + H2O = 2-acyl-sn-glycero-3-phospho-(1'-sn-glycerol) + a fatty acid + H(+). It catalyses the reaction 1-hexadecanoyl-2-(9Z-octadecenoyl)-sn-glycero-3-phospho-(1'-sn-glycerol) + H2O = 2-(9Z-octadecenoyl)-sn-glycero-3-phospho-(1'-sn-glycerol) + hexadecanoate + H(+). Inhibited by zinc ions at neutral pH. Zinc ions in plasma may keep the enzyme from hydrolyzing inappropriate substrates. Functionally, has dual calcium-independent phospholipase and O-acyltransferase activities with a potential role in glycerophospholipid homeostasis and remodeling of acyl groups of lipophilic alcohols present in acidic cellular compartments. Catalyzes hydrolysis of the ester bond of the fatty acyl group attached at sn-1 or sn-2 position of phospholipids (phospholipase A1 or A2 activity) and transfer it to the hydroxyl group at the first carbon of lipophilic alcohols (O-acyltransferase activity). Among preferred fatty acyl donors are phosphatidylcholines, phosphatidylethanolamines, phosphatidylglycerols and phosphatidylserines. Favors sn-2 over sn-1 deacylation of unsaturated fatty acyl groups of phosphatidylcholines, phosphatidylethanolamines, and phosphatidylglycerols. Among preferred fatty acyl acceptors are natural lipophilic alcohols including short-chain ceramide N-acetyl-sphingosine (C2 ceramide), alkylacylglycerols, monoacylglycerols, and acylethanolamides such as anandamide and oleoylethanolamide. Selectively hydrolyzes the sn-1 fatty acyl group of truncated oxidized phospholipids and may play a role in detoxification of reactive oxidized phospholipids during oxidative stress. Required for normal phospholipid degradation in alveolar macrophages with potential implications in the clearance of pulmonary surfactant, which is mainly composed of dipalmitoylphosphatidylcholine (1,2-dihexadecanoyl-sn-glycero-3-phosphocholine). Involved in the first step of bis(monoacylglycero)phosphate (BMP) de novo synthesis from phosphatidylglycerol (1,2-diacyl-sn-glycero-3-phospho-(1'-sn-glycerol), PG). BMP is an important player in cargo sorting and degradation, regulation of cellular cholesterol levels and intercellular communication. At neutral pH, hydrolyzes the sn-1 fatty acyl group of the lysophosphatidylcholines. The polypeptide is Lysosomal phospholipase A and acyltransferase (Homo sapiens (Human)).